A 252-amino-acid polypeptide reads, in one-letter code: Hydroxyacylglutathione hydrolase (252 aa).

His-54, His-56, Asp-58, His-59, His-111, Asp-130, and His-170 together coordinate Zn(2+).

This sequence belongs to the metallo-beta-lactamase superfamily. Glyoxalase II family. In terms of assembly, monomer. Zn(2+) serves as cofactor.

It catalyses the reaction an S-(2-hydroxyacyl)glutathione + H2O = a 2-hydroxy carboxylate + glutathione + H(+). The protein operates within secondary metabolite metabolism; methylglyoxal degradation; (R)-lactate from methylglyoxal: step 2/2. In terms of biological role, thiolesterase that catalyzes the hydrolysis of S-D-lactoyl-glutathione to form glutathione and D-lactic acid. The sequence is that of Hydroxyacylglutathione hydrolase from Francisella philomiragia subsp. philomiragia (strain ATCC 25017 / CCUG 19701 / FSC 153 / O#319-036).